The primary structure comprises 711 residues: Ribosomal RNA large subunit methyltransferase K/L (711 aa).

The 112-residue stretch at 43–154 folds into the THUMP domain; that stretch reads LGYRITLWSR…RGQITIGLNF (112 aa).

It belongs to the methyltransferase superfamily. RlmKL family.

The protein resides in the cytoplasm. The enzyme catalyses guanosine(2445) in 23S rRNA + S-adenosyl-L-methionine = N(2)-methylguanosine(2445) in 23S rRNA + S-adenosyl-L-homocysteine + H(+). It carries out the reaction guanosine(2069) in 23S rRNA + S-adenosyl-L-methionine = N(2)-methylguanosine(2069) in 23S rRNA + S-adenosyl-L-homocysteine + H(+). Specifically methylates the guanine in position 2445 (m2G2445) and the guanine in position 2069 (m7G2069) of 23S rRNA. This chain is Ribosomal RNA large subunit methyltransferase K/L, found in Shewanella woodyi (strain ATCC 51908 / MS32).